The chain runs to 478 residues: MASISAATATSSTKLVSSNSTNPLLPSSTKPSKLILSSSFTPNCSTLFLHSPATPSSTATHRHRRFTVRAARGKFERKKPHVNIGTIGHVDHGKTTLTAALTMALASMGNSAPKKYDEIDAAPEERARGITINTATVEYETENRHYAHVDCPGHADYVKNMITGAAQMDGAILVCSGADGPMPQTKEHILLAKQVGVPNMVVFLNKQDQVDDEELLQLVELEVRELLSSYEFPGDDIPIISGSALLALEALMANPSIKRGENQWVDKIYELMDAVDSYIPIPVRQTELPFLMAIEDVFSITGRGTVATGRVERGTVRIGDTVDIVGLKDTRSTTVTGVEMFQKILDEAMAGDNVGLLLRGIQKIDIQRGMVLAKPGTITPHTKFEAIVYVLKKEEGGRHSPFFSGYRPQFYMRTTDVTGKVTSITTDKGEESKMVMPGDRVNLVVELIMPVACEQGMRFAIREGGKTVGAGVIQKIIE.

The segment covering 1 to 29 (MASISAATATSSTKLVSSNSTNPLLPSST) has biased composition (low complexity). The interval 1–31 (MASISAATATSSTKLVSSNSTNPLLPSSTKP) is disordered. The transit peptide at 1 to 69 (MASISAATAT…THRHRRFTVR (69 aa)) directs the protein to the chloroplast. One can recognise a tr-type G domain in the interval 79–283 (KPHVNIGTIG…AVDSYIPIPV (205 aa)). The G1 stretch occupies residues 88-95 (GHVDHGKT). A GTP-binding site is contributed by 88-95 (GHVDHGKT). Residues 129-133 (GITIN) are G2. Residues 150 to 153 (DCPG) form a G3 region. Residues 150–154 (DCPGH) and 205–208 (NKQD) each bind GTP. The G4 stretch occupies residues 205 to 208 (NKQD). The interval 243 to 245 (SAL) is G5.

Belongs to the TRAFAC class translation factor GTPase superfamily. Classic translation factor GTPase family. EF-Tu/EF-1A subfamily.

The protein localises to the plastid. The protein resides in the chloroplast. This protein promotes the GTP-dependent binding of aminoacyl-tRNA to the A-site of ribosomes during protein biosynthesis. The protein is Elongation factor Tu, chloroplastic (TUFA) of Nicotiana tabacum (Common tobacco).